Consider the following 621-residue polypeptide: Zinc metalloproteinase-disintegrin-like NaMP (621 aa).

Positions 1–20 are cleaved as a signal peptide; the sequence is MIQPLLVAICLVVFPYQGSS. Residues 21–188 constitute a propeptide that is removed on maturation; that stretch reads TILESGKVRD…GESDETIKKI (168 aa). Residues 206–402 enclose the Peptidase M12B domain; it reads KHIELYMVAD…KSAQCILNDP (197 aa). Residues Asn225, Asn268, and Asn319 are each glycosylated (N-linked (GlcNAc...) asparagine). 17 disulfide bridges follow: Cys317/Cys397, Cys357/Cys381, Cys359/Cys364, Cys413/Cys442, Cys424/Cys437, Cys426/Cys432, Cys436/Cys459, Cys450/Cys456, Cys455/Cys481, Cys468/Cys488, Cys475/Cys507, Cys500/Cys512, Cys519/Cys569, Cys534/Cys579, Cys547/Cys557, Cys564/Cys605, and Cys599/Cys610. A Zn(2+)-binding site is contributed by His342. Glu343 is an active-site residue. 2 residues coordinate Zn(2+): His346 and His352. Positions 410–496 constitute a Disintegrin domain; it reads TAICGNGFVE…ECPMNHFHMN (87 aa). Positions 474 to 476 match the D/ECD-tripeptide motif; it reads DCD. N-linked (GlcNAc...) asparagine glycosylation is present at Asn551.

This sequence belongs to the venom metalloproteinase (M12B) family. P-III subfamily. P-IIIa sub-subfamily. In terms of assembly, monomer. It depends on Zn(2+) as a cofactor. In terms of tissue distribution, expressed by the venom gland.

It localises to the secreted. Its function is as follows. Snake venom zinc metalloproteinase that inhibits platelet aggregation and degrades fibrinogen. This Naja atra (Chinese cobra) protein is Zinc metalloproteinase-disintegrin-like NaMP.